Consider the following 97-residue polypeptide: Cell division protein FtsL (97 aa).

Residues 1-11 (MSRLFVKRLPT) are Cytoplasmic-facing. A helical transmembrane segment spans residues 12–32 (GSFLMLLLYIGLLLSAIAVAY). Residues 33 to 97 (STYWNRQLLN…DPAEVRMVAP (65 aa)) lie on the Periplasmic side of the membrane.

This sequence belongs to the FtsL family. In terms of assembly, part of a complex composed of FtsB, FtsL and FtsQ.

The protein resides in the cell inner membrane. Functionally, essential cell division protein. May link together the upstream cell division proteins, which are predominantly cytoplasmic, with the downstream cell division proteins, which are predominantly periplasmic. The protein is Cell division protein FtsL of Pseudomonas aeruginosa (strain ATCC 15692 / DSM 22644 / CIP 104116 / JCM 14847 / LMG 12228 / 1C / PRS 101 / PAO1).